Here is a 105-residue protein sequence, read N- to C-terminus: U-scoloptoxin(16)-Sm4a (105 aa).

A signal peptide spans 1-22; that stretch reads MWALTVFVTILAAAIPITGVTG.

The protein belongs to the scoloptoxin-16 family. Post-translationally, contains 4 disulfide bonds. As to expression, expressed by the venom gland.

The protein resides in the secreted. The chain is U-scoloptoxin(16)-Sm4a from Scolopendra morsitans (Tanzanian blue ringleg centipede).